The chain runs to 400 residues: Phosphoglycerate kinase (400 aa).

Residues aspartate 23–asparagine 25, arginine 38, histidine 61–arginine 64, arginine 120, and arginine 153 each bind substrate. Residues lysine 203, glutamate 325, and glycine 355–threonine 358 contribute to the ATP site.

Belongs to the phosphoglycerate kinase family. As to quaternary structure, monomer.

It is found in the cytoplasm. It catalyses the reaction (2R)-3-phosphoglycerate + ATP = (2R)-3-phospho-glyceroyl phosphate + ADP. The protein operates within carbohydrate degradation; glycolysis; pyruvate from D-glyceraldehyde 3-phosphate: step 2/5. The chain is Phosphoglycerate kinase from Methylorubrum extorquens (strain CM4 / NCIMB 13688) (Methylobacterium extorquens).